We begin with the raw amino-acid sequence, 236 residues long: Phosphoribosylaminoimidazole-succinocarboxamide synthase (236 aa).

The protein belongs to the SAICAR synthetase family.

The enzyme catalyses 5-amino-1-(5-phospho-D-ribosyl)imidazole-4-carboxylate + L-aspartate + ATP = (2S)-2-[5-amino-1-(5-phospho-beta-D-ribosyl)imidazole-4-carboxamido]succinate + ADP + phosphate + 2 H(+). The protein operates within purine metabolism; IMP biosynthesis via de novo pathway; 5-amino-1-(5-phospho-D-ribosyl)imidazole-4-carboxamide from 5-amino-1-(5-phospho-D-ribosyl)imidazole-4-carboxylate: step 1/2. The polypeptide is Phosphoribosylaminoimidazole-succinocarboxamide synthase (Chlorobium limicola (strain DSM 245 / NBRC 103803 / 6330)).